The primary structure comprises 577 residues: Acyl-coenzyme A synthetase ACSM1, mitochondrial (577 aa).

Residues 1 to 31 (MQWLMRFRTLWGIHKSFHNIHPAPSQLRCRS) constitute a mitochondrion transit peptide. At Lys85 the chain carries N6-succinyllysine. Position 146 is an N6-acetyllysine; alternate (Lys146). Position 146 is an N6-succinyllysine; alternate (Lys146). N6-succinyllysine is present on Lys183. Lys204 carries the post-translational modification N6-acetyllysine; alternate. Lys204 is modified (N6-succinyllysine; alternate). N6-acetyllysine is present on Lys214. 226–234 (TSGTTGFPK) serves as a coordination point for ATP. Lys237 bears the N6-succinyllysine mark. N6-acetyllysine; alternate occurs at positions 356 and 391. Residues Lys356 and Lys391 each carry the N6-succinyllysine; alternate modification. 2 residues coordinate ATP: Asp452 and Arg467. Lys531 bears the N6-acetyllysine mark. At Lys538 the chain carries N6-acetyllysine; alternate. At Lys538 the chain carries N6-succinyllysine; alternate. At Lys549 the chain carries N6-acetyllysine. Lys563 contacts ATP.

The protein belongs to the ATP-dependent AMP-binding enzyme family. Monomer. Mg(2+) is required as a cofactor. It depends on Mn(2+) as a cofactor.

It is found in the mitochondrion matrix. Its subcellular location is the mitochondrion. It carries out the reaction a medium-chain fatty acid + ATP + CoA = a medium-chain fatty acyl-CoA + AMP + diphosphate. The enzyme catalyses benzoate + ATP + CoA = benzoyl-CoA + AMP + diphosphate. It catalyses the reaction (R)-lipoate + GTP + H(+) = (R)-lipoyl-GMP + diphosphate. The catalysed reaction is octanoate + ATP + CoA = octanoyl-CoA + AMP + diphosphate. It carries out the reaction decanoate + ATP + CoA = decanoyl-CoA + AMP + diphosphate. The enzyme catalyses dodecanoate + ATP + CoA = dodecanoyl-CoA + AMP + diphosphate. It catalyses the reaction tetradecanoate + ATP + CoA = tetradecanoyl-CoA + AMP + diphosphate. The catalysed reaction is hexanoate + ATP + CoA = hexanoyl-CoA + AMP + diphosphate. It carries out the reaction butanoate + ATP + CoA = butanoyl-CoA + AMP + diphosphate. The enzyme catalyses hexadecanoate + ATP + CoA = hexadecanoyl-CoA + AMP + diphosphate. With respect to regulation, activated by monovalent cations, such as potassium, rubidium or ammonium. Functionally, catalyzes the activation of fatty acids by CoA to produce an acyl-CoA, the first step in fatty acid metabolism. Capable of activating medium-chain fatty acids (e.g. butyric (C4) to decanoic (C10) acids), and certain carboxylate-containing xenobiotics, e.g. benzoate. Also catalyzes the activation of lipoate to lipoyl-nucleoside monophosphate. Activates lipoate with GTP at a 1000-fold higher rate than with ATP and activates both (R)- and (S)-lipoate to the respective lipoyl-GMP, with a preference for (R)-lipoate. In Homo sapiens (Human), this protein is Acyl-coenzyme A synthetase ACSM1, mitochondrial (ACSM1).